Consider the following 305-residue polypeptide: tRNA dimethylallyltransferase (305 aa).

9-16 (GPTASGKT) is a binding site for ATP. 11 to 16 (TASGKT) contacts substrate. Interaction with substrate tRNA stretches follow at residues 34 to 37 (DSAL), 158 to 162 (QRLSR), and 239 to 244 (RCVGYR).

It belongs to the IPP transferase family. Monomer. It depends on Mg(2+) as a cofactor.

The catalysed reaction is adenosine(37) in tRNA + dimethylallyl diphosphate = N(6)-dimethylallyladenosine(37) in tRNA + diphosphate. Catalyzes the transfer of a dimethylallyl group onto the adenine at position 37 in tRNAs that read codons beginning with uridine, leading to the formation of N6-(dimethylallyl)adenosine (i(6)A). The protein is tRNA dimethylallyltransferase of Aeromonas hydrophila subsp. hydrophila (strain ATCC 7966 / DSM 30187 / BCRC 13018 / CCUG 14551 / JCM 1027 / KCTC 2358 / NCIMB 9240 / NCTC 8049).